The chain runs to 338 residues: Anthranilate phosphoribosyltransferase (338 aa).

5-phospho-alpha-D-ribose 1-diphosphate is bound by residues glycine 81, 84–85, serine 89, 91–94, 109–117, and serine 121; these read GD, NIST, and KHGNRSVSS. Glycine 81 is an anthranilate binding site. Serine 93 provides a ligand contact to Mg(2+). Asparagine 112 provides a ligand contact to anthranilate. Arginine 167 contacts anthranilate. Residues aspartate 226 and glutamate 227 each contribute to the Mg(2+) site.

The protein belongs to the anthranilate phosphoribosyltransferase family. As to quaternary structure, homodimer. The cofactor is Mg(2+).

The catalysed reaction is N-(5-phospho-beta-D-ribosyl)anthranilate + diphosphate = 5-phospho-alpha-D-ribose 1-diphosphate + anthranilate. It participates in amino-acid biosynthesis; L-tryptophan biosynthesis; L-tryptophan from chorismate: step 2/5. Functionally, catalyzes the transfer of the phosphoribosyl group of 5-phosphorylribose-1-pyrophosphate (PRPP) to anthranilate to yield N-(5'-phosphoribosyl)-anthranilate (PRA). This is Anthranilate phosphoribosyltransferase from Thioalkalivibrio sulfidiphilus (strain HL-EbGR7).